We begin with the raw amino-acid sequence, 437 residues long: Type II methyltransferase M.HgiBI (437 aa).

Residues 4-431 (FRFIDLFAGI…KALQCVKLFE (428 aa)) enclose the SAM-dependent MTase C5-type domain. Residue Cys75 is part of the active site.

The protein belongs to the class I-like SAM-binding methyltransferase superfamily. C5-methyltransferase family.

The enzyme catalyses a 2'-deoxycytidine in DNA + S-adenosyl-L-methionine = a 5-methyl-2'-deoxycytidine in DNA + S-adenosyl-L-homocysteine + H(+). A methylase that recognizes the double-stranded sequence 5'-GGWCC-3', methylates C-? on both strands, and protects the DNA from cleavage by the HgiBI endonuclease. This system is less active than isoschizomeric RM.HgiEI. The polypeptide is Type II methyltransferase M.HgiBI (Herpetosiphon aurantiacus (Herpetosiphon giganteus)).